Reading from the N-terminus, the 182-residue chain is Bifunctional protein PyrR (182 aa).

The PRPP-binding signature appears at 99–111 (VVLVDDVLFTGRT).

The protein belongs to the purine/pyrimidine phosphoribosyltransferase family. PyrR subfamily.

It catalyses the reaction UMP + diphosphate = 5-phospho-alpha-D-ribose 1-diphosphate + uracil. Regulates the transcription of the pyrimidine nucleotide (pyr) operon in response to exogenous pyrimidines. Functionally, also displays a weak uracil phosphoribosyltransferase activity which is not physiologically significant. The chain is Bifunctional protein PyrR from Chloroflexus aurantiacus (strain ATCC 29366 / DSM 635 / J-10-fl).